We begin with the raw amino-acid sequence, 148 residues long: Flagellar assembly factor FliW (148 aa).

It belongs to the FliW family. As to quaternary structure, interacts with translational regulator CsrA and flagellin(s).

It localises to the cytoplasm. Its function is as follows. Acts as an anti-CsrA protein, binds CsrA and prevents it from repressing translation of its target genes, one of which is flagellin. Binds to flagellin and participates in the assembly of the flagellum. The protein is Flagellar assembly factor FliW of Ruminiclostridium cellulolyticum (strain ATCC 35319 / DSM 5812 / JCM 6584 / H10) (Clostridium cellulolyticum).